Consider the following 217-residue polypeptide: MALVLKISGRVFDNEELVLKYAEILNKLPGRIAVVAGGGEVARRYIAVARKGGASNTFQDLLGIYASRLNALLLISLLKDAYAKVPRNMEEFLEAWGRSRIVVTGGFQPGQSTATVAALVAEAVRAAALLNAANIDAVYSDDPRKNPNATRLSELKYDEFERILRSSNLPGGYELIDTWAVSILKRSCITTYIFDGRTPEAIEAVVRGENPGSKITC.

Residue 6–10 (KISGR) participates in ATP binding. Residue Gly38 participates in UMP binding. Gly39 and Arg43 together coordinate ATP. UMP contacts are provided by residues Asp60 and 107 to 113 (FQPGQST). ATP-binding residues include Asn134, Tyr139, and Asp142.

This sequence belongs to the UMP kinase family. Homohexamer.

The protein localises to the cytoplasm. The catalysed reaction is UMP + ATP = UDP + ADP. Its pathway is pyrimidine metabolism; CTP biosynthesis via de novo pathway; UDP from UMP (UMPK route): step 1/1. With respect to regulation, inhibited by UTP. Catalyzes the reversible phosphorylation of UMP to UDP. The protein is Uridylate kinase of Pyrobaculum arsenaticum (strain DSM 13514 / JCM 11321 / PZ6).